A 183-amino-acid polypeptide reads, in one-letter code: Large ribosomal subunit protein uL6 (183 aa).

This sequence belongs to the universal ribosomal protein uL6 family. Part of the 50S ribosomal subunit.

Its function is as follows. This protein binds to the 23S rRNA, and is important in its secondary structure. It is located near the subunit interface in the base of the L7/L12 stalk, and near the tRNA binding site of the peptidyltransferase center. This chain is Large ribosomal subunit protein uL6, found in Ruminiclostridium cellulolyticum (strain ATCC 35319 / DSM 5812 / JCM 6584 / H10) (Clostridium cellulolyticum).